Consider the following 333-residue polypeptide: Cytochrome f (333 aa).

The N-terminal stretch at 1–16 (MRNVFRTARLTRSARA) is a signal peptide. The helical transmembrane segment at 17–36 (IVKTLLIAIATVTFYFTSDL) threads the bilayer. Residues Tyr-45, Cys-66, Cys-69, and His-70 each coordinate heme. The helical transmembrane segment at 299 to 319 (VKWMIAFVALVMLAQVMLVLK) threads the bilayer.

The protein belongs to the cytochrome f family. In terms of assembly, the 4 large subunits of the cytochrome b6-f complex are cytochrome b6, subunit IV (17 kDa polypeptide, PetD), cytochrome f and the Rieske protein, while the 4 small subunits are PetG, PetL, PetM and PetN. The complex functions as a dimer. It depends on heme as a cofactor.

The protein resides in the cellular thylakoid membrane. In terms of biological role, component of the cytochrome b6-f complex, which mediates electron transfer between photosystem II (PSII) and photosystem I (PSI), cyclic electron flow around PSI, and state transitions. This Nostoc punctiforme (strain ATCC 29133 / PCC 73102) protein is Cytochrome f.